The sequence spans 231 residues: uncharacterized protein (231 aa).

7 helical membrane-spanning segments follow: residues 26 to 46, 56 to 76, 84 to 104, 112 to 132, 142 to 162, 163 to 183, and 206 to 226; these read TYSWMAAGLALTAGVAYLTAQ, SLRLPLMLAQLALVFVLSMFA, AGALFVGYAALTGLTFSALLF, ITAFAVSAGTFGLMSVAGFVI, FFLFAVLGLVVAMLVNLFVGS, SALSLGISMIGVFLFAGLTAY, and INGALALYLDFINIFLFLLNI.

Belongs to the BI1 family.

The protein resides in the cell membrane. This is an uncharacterized protein from Deinococcus radiodurans (strain ATCC 13939 / DSM 20539 / JCM 16871 / CCUG 27074 / LMG 4051 / NBRC 15346 / NCIMB 9279 / VKM B-1422 / R1).